The following is a 25-amino-acid chain: Cytochrome c oxidase polypeptide VIIc (25 aa).

The interval 1–25 (SHYSEGPGQNLPFSVQNKXRLLGMM) is disordered.

It belongs to the cytochrome c oxidase VIIc family. In terms of assembly, component of the cytochrome c oxidase (complex IV, CIV), a multisubunit enzyme composed of 14 subunits. The complex is composed of a catalytic core of 3 subunits MT-CO1, MT-CO2 and MT-CO3, encoded in the mitochondrial DNA, and 11 supernumerary subunits COX4I, COX5A, COX5B, COX6A, COX6B, COX6C, COX7A, COX7B, COX7C, COX8 and NDUFA4, which are encoded in the nuclear genome. The complex exists as a monomer or a dimer and forms supercomplexes (SCs) in the inner mitochondrial membrane with NADH-ubiquinone oxidoreductase (complex I, CI) and ubiquinol-cytochrome c oxidoreductase (cytochrome b-c1 complex, complex III, CIII), resulting in different assemblies (supercomplex SCI(1)III(2)IV(1) and megacomplex MCI(2)III(2)IV(2)). Interacts with RAB5IF.

The protein localises to the mitochondrion inner membrane. It functions in the pathway energy metabolism; oxidative phosphorylation. Its function is as follows. Component of the cytochrome c oxidase, the last enzyme in the mitochondrial electron transport chain which drives oxidative phosphorylation. The respiratory chain contains 3 multisubunit complexes succinate dehydrogenase (complex II, CII), ubiquinol-cytochrome c oxidoreductase (cytochrome b-c1 complex, complex III, CIII) and cytochrome c oxidase (complex IV, CIV), that cooperate to transfer electrons derived from NADH and succinate to molecular oxygen, creating an electrochemical gradient over the inner membrane that drives transmembrane transport and the ATP synthase. Cytochrome c oxidase is the component of the respiratory chain that catalyzes the reduction of oxygen to water. Electrons originating from reduced cytochrome c in the intermembrane space (IMS) are transferred via the dinuclear copper A center (CU(A)) of subunit 2 and heme A of subunit 1 to the active site in subunit 1, a binuclear center (BNC) formed by heme A3 and copper B (CU(B)). The BNC reduces molecular oxygen to 2 water molecules using 4 electrons from cytochrome c in the IMS and 4 protons from the mitochondrial matrix. The polypeptide is Cytochrome c oxidase polypeptide VIIc (Oncorhynchus mykiss (Rainbow trout)).